The primary structure comprises 1407 residues: DNA-directed RNA polymerase subunit beta' (1407 aa).

Zn(2+) is bound by residues Cys70, Cys72, Cys85, and Cys88. Positions 460, 462, and 464 each coordinate Mg(2+). Cys814, Cys888, Cys895, and Cys898 together coordinate Zn(2+). Residue Lys972 is modified to N6-acetyllysine.

Belongs to the RNA polymerase beta' chain family. The RNAP catalytic core consists of 2 alpha, 1 beta, 1 beta' and 1 omega subunit. When a sigma factor is associated with the core the holoenzyme is formed, which can initiate transcription. Mg(2+) serves as cofactor. It depends on Zn(2+) as a cofactor.

The catalysed reaction is RNA(n) + a ribonucleoside 5'-triphosphate = RNA(n+1) + diphosphate. Functionally, DNA-dependent RNA polymerase catalyzes the transcription of DNA into RNA using the four ribonucleoside triphosphates as substrates. This chain is DNA-directed RNA polymerase subunit beta', found in Escherichia coli (strain SMS-3-5 / SECEC).